A 474-amino-acid chain; its full sequence is Gamma-aminobutyric acid receptor subunit beta-1 (474 aa).

The first 25 residues, 1 to 25, serve as a signal peptide directing secretion; the sequence is MWTVQNRESLGLLSFPVMVAMVCCA. The Extracellular portion of the chain corresponds to 26 to 245; it reads HSSNEPSNMS…SFRLKRNIGY (220 aa). N-linked (GlcNAc...) asparagine glycosylation is found at Asn33 and Asn105. Residue Tyr122 coordinates histamine. A disulfide bridge links Cys161 with Cys175. Residue Asn174 is glycosylated (N-linked (GlcNAc...) asparagine). Residues 181 to 182 and Thr227 contribute to the histamine site; that span reads SY. 4-aminobutanoate contacts are provided by Tyr182 and Thr227. The next 3 membrane-spanning stretches (helical) occupy residues 246-267, 271-293, and 305-327; these read FILQ…SFWI, ASAA…STHL, and AIDI…YAFV. Topologically, residues 328–451 are cytoplasmic; it reads NYIFFGKGPQ…DLTDVNSIDK (124 aa). A helical membrane pass occupies residues 452 to 473; that stretch reads WSRMFFPITFSLFNVVYWLYYV.

Belongs to the ligand-gated ion channel (TC 1.A.9) family. Gamma-aminobutyric acid receptor (TC 1.A.9.5) subfamily. GABRB1 sub-subfamily. As to quaternary structure, heteropentamer, formed by a combination of alpha (GABRA1-6), beta (GABRB1-3), gamma (GABRG1-3), delta (GABRD), epsilon (GABRE), rho (GABRR1-3), pi (GABRP) and theta (GABRQ) chains, each subunit exhibiting distinct physiological and pharmacological properties. Binds UBQLN1.

Its subcellular location is the postsynaptic cell membrane. The protein resides in the cell membrane. It carries out the reaction chloride(in) = chloride(out). With respect to regulation, potentiated by histamine. Functionally, beta subunit of the heteropentameric ligand-gated chloride channel gated by gamma-aminobutyric acid (GABA), a major inhibitory neurotransmitter in the brain. GABA-gated chloride channels, also named GABA(A) receptors (GABAAR), consist of five subunits arranged around a central pore and contain GABA active binding site(s) located at the alpha and beta subunit interface(s). When activated by GABA, GABAARs selectively allow the flow of chloride anions across the cell membrane down their electrochemical gradient. Chloride influx into the postsynaptic neuron following GABAAR opening decreases the neuron ability to generate a new action potential, thereby reducing nerve transmission. Beta-containing GABAARs can simultaneously bind GABA and histamine where histamine binds at the interface of two neighboring beta subunits, which may be involved in the regulation of sleep and wakefulness. This Mus musculus (Mouse) protein is Gamma-aminobutyric acid receptor subunit beta-1.